The following is a 279-amino-acid chain: Replication factor A protein 2 (279 aa).

Positions 26–47 (GAGFNEYDQSSQPSVDRQQGAG) are disordered. Polar residues predominate over residues 32–46 (YDQSSQPSVDRQQGA). Residues 80–140 (VTFVGVLRNI…GNIKIFSGKI (61 aa)) constitute a DNA-binding region (OB).

The protein belongs to the replication factor A protein 2 family. As to quaternary structure, heterotrimer of 68, 30, and 12 kDa chains. Post-translationally, phosphorylated in a cell cycle-dependent manner. Hypophosphorylated in G1, becomes phosphorylated at the G1/S boundary, it is maintained in this state through the M phase.

Its subcellular location is the nucleus. In terms of biological role, binds to single-stranded sequences. This Schizosaccharomyces pombe (strain 972 / ATCC 24843) (Fission yeast) protein is Replication factor A protein 2 (ssb2).